A 922-amino-acid chain; its full sequence is Isoleucine--tRNA ligase (922 aa).

The short motif at 57–67 (PYANGDIHLGH) is the 'HIGH' region element. Glutamate 553 contributes to the L-isoleucyl-5'-AMP binding site. Residues 594–598 (KMSKS) carry the 'KMSKS' region motif. Lysine 597 is an ATP binding site. Cysteine 892, cysteine 895, cysteine 912, and cysteine 915 together coordinate Zn(2+).

This sequence belongs to the class-I aminoacyl-tRNA synthetase family. IleS type 1 subfamily. As to quaternary structure, monomer. Requires Zn(2+) as cofactor.

It is found in the cytoplasm. It carries out the reaction tRNA(Ile) + L-isoleucine + ATP = L-isoleucyl-tRNA(Ile) + AMP + diphosphate. Catalyzes the attachment of isoleucine to tRNA(Ile). As IleRS can inadvertently accommodate and process structurally similar amino acids such as valine, to avoid such errors it has two additional distinct tRNA(Ile)-dependent editing activities. One activity is designated as 'pretransfer' editing and involves the hydrolysis of activated Val-AMP. The other activity is designated 'posttransfer' editing and involves deacylation of mischarged Val-tRNA(Ile). The polypeptide is Isoleucine--tRNA ligase (Desulfitobacterium hafniense (strain DSM 10664 / DCB-2)).